The chain runs to 390 residues: GTPase Obg (390 aa).

An Obg domain is found at 1 to 159 (MKFVDEATIL…RDLQLELMLL (159 aa)). The segment at 127-146 (NTRFKSSVNRTPRQKTMGTP) is disordered. A compositionally biased stretch (polar residues) spans 129–143 (RFKSSVNRTPRQKTM). Residues 160 to 333 (ADVGMLGMPN…LCWDVMHFII (174 aa)) enclose the OBG-type G domain. Residues 166 to 173 (GMPNAGKS), 191 to 195 (FTTLV), 213 to 216 (DIPG), 283 to 286 (NKID), and 314 to 316 (SAA) each bind GTP. Positions 173 and 193 each coordinate Mg(2+). Over residues 364–384 (MEAEAEEEWDDDWDEDDDEGV) the composition is skewed to acidic residues. The disordered stretch occupies residues 364 to 390 (MEAEAEEEWDDDWDEDDDEGVEIVYQR).

It belongs to the TRAFAC class OBG-HflX-like GTPase superfamily. OBG GTPase family. In terms of assembly, monomer. It depends on Mg(2+) as a cofactor.

The protein resides in the cytoplasm. In terms of biological role, an essential GTPase which binds GTP, GDP and possibly (p)ppGpp with moderate affinity, with high nucleotide exchange rates and a fairly low GTP hydrolysis rate. Plays a role in control of the cell cycle, stress response, ribosome biogenesis and in those bacteria that undergo differentiation, in morphogenesis control. This is GTPase Obg from Cronobacter sakazakii (strain ATCC BAA-894) (Enterobacter sakazakii).